A 68-amino-acid chain; its full sequence is Large ribosomal subunit protein uL29 (68 aa).

It belongs to the universal ribosomal protein uL29 family.

The chain is Large ribosomal subunit protein uL29 from Picosynechococcus sp. (strain ATCC 27264 / PCC 7002 / PR-6) (Agmenellum quadruplicatum).